Consider the following 297-residue polypeptide: Vacuolar protein sorting-associated protein 26C (297 aa).

This sequence belongs to the VPS26 family. In terms of assembly, component of the commander complex that is essential for endosomal recycling of transmembrane cargos; the commander complex is composed of the CCC subcomplex and the retriever subcomplex. Component of the heterotrimeric retriever complex consisting of VPS26C, VPS29 and VPS35L; within the complex interacts with VPS35L. Interacts with SNX17 (via C-terminus); the interaction is direct and associates SNX17 with the retriever complex. Interacts with SNX31; the interaction is direct.

The protein localises to the endosome. Component of the commander complex that is essential for endosomal recycling of transmembrane cargos; the commander complex is composed of the CCC subcomplex and the retriever subcomplex. Component of the retriever complex, which is a heterotrimeric complex related to retromer cargo-selective complex (CSC) and essential for retromer-independent retrieval and recycling of numerous cargos such as integrin alpha-5/beta-1 (ITGA5:ITGB1). The recruitment of the retriever complex to the endosomal membrane involves CCC and WASH complexes. In the endosomes, drives the retriever and recycling of NxxY-motif-containing cargo proteins by coupling to SNX17, a cargo essential for the homeostatic maintenance of numerous cell surface proteins associated with processes that include cell migration, cell adhesion, nutrient supply and cell signaling. The polypeptide is Vacuolar protein sorting-associated protein 26C (Mus musculus (Mouse)).